A 432-amino-acid chain; its full sequence is NADH-quinone oxidoreductase subunit D (432 aa).

The protein belongs to the complex I 49 kDa subunit family. NDH-1 is composed of 14 different subunits. Subunits NuoB, C, D, E, F, and G constitute the peripheral sector of the complex.

It is found in the cell membrane. It catalyses the reaction a quinone + NADH + 5 H(+)(in) = a quinol + NAD(+) + 4 H(+)(out). In terms of biological role, NDH-1 shuttles electrons from NADH, via FMN and iron-sulfur (Fe-S) centers, to quinones in the respiratory chain. The immediate electron acceptor for the enzyme in this species is believed to be a menaquinone. Couples the redox reaction to proton translocation (for every two electrons transferred, four hydrogen ions are translocated across the cytoplasmic membrane), and thus conserves the redox energy in a proton gradient. In Mycobacterium marinum (strain ATCC BAA-535 / M), this protein is NADH-quinone oxidoreductase subunit D.